The following is a 447-amino-acid chain: Chordin-like protein 1 (447 aa).

The N-terminal stretch at 1-22 (MDGMKYIISLFFIFVFLEGSKT) is a signal peptide. 2 VWFC domains span residues 30-95 (TYCV…PRCP) and 108-174 (KSCE…RVCR). The N-linked (GlcNAc...) asparagine glycan is linked to asparagine 113. The Cell attachment site signature appears at 174–176 (RGD). Residues 200–224 (SYLRSPYDPPPNRQAGGLPRFPGSR) are disordered. Positions 253–318 (QVCVSNGKTY…IDGKCCKVCP (66 aa)) constitute a VWFC 3 domain. The N-linked (GlcNAc...) asparagine glycan is linked to asparagine 286.

Post-translationally, may be glycosylated. Expressed in heart, brain, lung, liver, kidney and testis.

It localises to the secreted. In terms of biological role, seems to antagonize the function of BMP4 by binding to it and preventing its interaction with receptors. Alters the fate commitment of neural stem cells from gliogenesis to neurogenesis. Contributes to neuronal differentiation of neural stem cells in the brain by preventing the adoption of a glial fate. May play a crucial role in dorsoventral axis formation. Antagonizes the function of BMP7 and may thus play an important role in the embryonic bone formation. Shows no inhibitory effect on the inducing activity of BMP2. Plays a role during anterior segment eye development. The chain is Chordin-like protein 1 (Chrdl1) from Mus musculus (Mouse).